A 642-amino-acid polypeptide reads, in one-letter code: AEKIKICLQKQVNSSFSLHNGFGGNLYATEEKRMFELVKPKAGASVLNQSTWICFGDSRTDQSNSAFPRSADVSAKTADKFRSLSGGSLMLSMFGPPGKVDYLYQGCGKHKVFYEGVNWSPHAAIDCYRKNWTDIKLNFQKSIYELASQSHCMSLVNALDKTIPLQVTKGVAKNCNNSFLKNPALYTQEVKPLEQICGEENLAFFTLPTQFGTYECKLHLVASCYFIYDSKEVYNKRGCGNYFQVIYDSSGKVVGGLDNRVSPYTGNTGDTPTMQCDMLQLKPGRYSVRSSPRFLLMPERSYCFDMKEKGLVTAVQSIWGKGRKSDYAVDQACLSTPGCMLIQKQKPYIGEADDHHGDQEMRELLSGLDYEARCISQSGWVNETSPFTEEYLLPPKFGRCPLAAKEESIPKIPDGLLIPTSGTDTTVTKPKSRIFGIDDLIIGLLFVAIVEAGIGGYLLGSRKESGGGVTKESAEKGFEKIGNDIQILRSSTNIAIEKLNDRITHDEQAIRDLTLEIENARSEALLGELGIIRALLVGNISIGLQESLWELASEITNRAGDLAVEVSPGCWIIDDNICDQSCQNFIFKFNETAPVPTIPPLDTKIDLQSDPFYWGSSLGLAITTPISLAALVISGIAICRTK.

Residue Ala1 is a signal peptide. The interval 2–27 is fusion domain-1; that stretch reads EKIKICLQKQVNSSFSLHNGFGGNLY. Residues 2–617 are Extracellular-facing; it reads EKIKICLQKQ…QSDPFYWGSS (616 aa). Cystine bridges form between Cys7–Cys570, Cys107–Cys152, Cys127–Cys175, Cys197–Cys239, Cys216–Cys303, Cys224–Cys276, and Cys333–Cys339. N-linked (GlcNAc...) asparagine; by host glycosylation is found at Asn13 and Asn48. Residues 28 to 138 are esterase domain-1; the sequence is ATEEKRMFEL…RKNWTDIKLN (111 aa). Ser58 functions as the Nucleophile in the catalytic mechanism. Asn131 carries N-linked (GlcNAc...) asparagine; by host glycosylation. An N-acetyl-9-O-acetylneuraminic acid binding region spans residues 138–297; it reads NFQKSIYELA…VRSSPRFLLM (160 aa). The segment at 298-352 is esterase domain-2; that stretch reads PERSYCFDMKEKGLVTAVQSIWGKGRKSDYAVDQACLSTPGCMLIQKQKPYIGEA. Residues Asp353 and His356 each act as charge relay system in the active site. The fusion domain-2 stretch occupies residues 353 to 638; that stretch reads DDHHGDQEMR…AALVISGIAI (286 aa). The N-linked (GlcNAc...) asparagine; by host glycan is linked to Asn382. Residues 618-638 traverse the membrane as a helical segment; it reads LGLAITTPISLAALVISGIAI. The Cytoplasmic portion of the chain corresponds to 639 to 642; that stretch reads CRTK.

The protein belongs to the influenza type C/coronaviruses hemagglutinin-esterase family. In terms of assembly, homotrimer of disulfide-linked HEF1-HEF2. In natural infection, inactive HEF is matured into HEF1 and HEF2 outside the cell by one or more trypsin-like, arginine-specific endoprotease.

The protein localises to the virion membrane. Its subcellular location is the host cell membrane. It catalyses the reaction N-acetyl-9-O-acetylneuraminate + H2O = N-acetylneuraminate + acetate + H(+). It carries out the reaction N-acetyl-4-O-acetylneuraminate + H2O = N-acetylneuraminate + acetate + H(+). Its function is as follows. Binds to the N-acetyl-9-O-acetylneuraminic acid residues on the cell surface, bringing about the attachment of the virus particle to the cell. Plays a major role in the determination of host range restriction and virulence. Class I viral fusion protein. Responsible for penetration of the virus into the cell cytoplasm by mediating the fusion of the membrane of the endocytosed virus particle with the endosomal membrane. Low pH in endosomes induce an irreversible conformational change in HEF2, releasing the fusion hydrophobic peptide. Several trimers are required to form a competent fusion pore. Displays a receptor-destroying activity which is a neuraminidate-O-acetyl esterase. This activity cleaves off any receptor on the cell surface, which would otherwise prevent virions release. These cleavages prevent self-aggregation and ensure the efficient spread of the progeny virus from cell to cell. The chain is Hemagglutinin-esterase-fusion glycoprotein (HE) from Influenza C virus (strain C/England/892/1983).